Consider the following 228-residue polypeptide: Orotidine 5'-phosphate decarboxylase (228 aa).

Substrate-binding positions include D20, K42, 70–79 (DFKVADIPET), S127, 180–190 (PGVGAQGGDPG), G202, and R203. The Proton donor role is filled by K72.

Belongs to the OMP decarboxylase family. Type 1 subfamily. Homodimer.

It catalyses the reaction orotidine 5'-phosphate + H(+) = UMP + CO2. It functions in the pathway pyrimidine metabolism; UMP biosynthesis via de novo pathway; UMP from orotate: step 2/2. Catalyzes the decarboxylation of orotidine 5'-monophosphate (OMP) to uridine 5'-monophosphate (UMP). In Methanothermobacter thermautotrophicus (strain ATCC 29096 / DSM 1053 / JCM 10044 / NBRC 100330 / Delta H) (Methanobacterium thermoautotrophicum), this protein is Orotidine 5'-phosphate decarboxylase (pyrF).